The chain runs to 317 residues: Lipopolysaccharide heptosyltransferase 1 (317 aa).

Threonine 187, threonine 188, lysine 192, glutamate 222, methionine 242, aspartate 261, threonine 262, glycine 263, and histidine 266 together coordinate ADP-L-glycero-beta-D-manno-heptose.

The protein belongs to the glycosyltransferase 9 family.

The protein resides in the cell inner membrane. The catalysed reaction is an alpha-Kdo-(2-&gt;4)-alpha-Kdo-(2-&gt;6)-lipid A + ADP-L-glycero-beta-D-manno-heptose = an L-alpha-D-Hep-(1-&gt;5)-[alpha-Kdo-(2-&gt;4)]-alpha-Kdo-(2-&gt;6)-lipid A + ADP + H(+). It participates in bacterial outer membrane biogenesis; LPS core biosynthesis. Functionally, glycosyltransferase involved in the biosynthesis of the core oligosaccharide region of lipopolysaccharide (LPS). Catalyzes the addition of the first heptose unit to one 3-deoxy-D-manno-octulosonic acid (Kdo) residue of the Kdo2-lipid A module. The sequence is that of Lipopolysaccharide heptosyltransferase 1 from Salmonella typhimurium (strain LT2 / SGSC1412 / ATCC 700720).